The following is a 180-amino-acid chain: NAD(P)H-quinone oxidoreductase subunit I, chloroplastic (180 aa).

4Fe-4S ferredoxin-type domains are found at residues 55–84 (GRIH…VDWR) and 95–124 (LNYS…MTEE). [4Fe-4S] cluster-binding residues include cysteine 64, cysteine 67, cysteine 70, cysteine 74, cysteine 104, cysteine 107, cysteine 110, and cysteine 114.

The protein belongs to the complex I 23 kDa subunit family. As to quaternary structure, NDH is composed of at least 16 different subunits, 5 of which are encoded in the nucleus. [4Fe-4S] cluster serves as cofactor.

Its subcellular location is the plastid. It is found in the chloroplast thylakoid membrane. It carries out the reaction a plastoquinone + NADH + (n+1) H(+)(in) = a plastoquinol + NAD(+) + n H(+)(out). It catalyses the reaction a plastoquinone + NADPH + (n+1) H(+)(in) = a plastoquinol + NADP(+) + n H(+)(out). Functionally, NDH shuttles electrons from NAD(P)H:plastoquinone, via FMN and iron-sulfur (Fe-S) centers, to quinones in the photosynthetic chain and possibly in a chloroplast respiratory chain. The immediate electron acceptor for the enzyme in this species is believed to be plastoquinone. Couples the redox reaction to proton translocation, and thus conserves the redox energy in a proton gradient. The protein is NAD(P)H-quinone oxidoreductase subunit I, chloroplastic of Zea mays (Maize).